A 292-amino-acid chain; its full sequence is Hydroxysqualene synthase (292 aa).

This sequence belongs to the phytoene/squalene synthase family. HpnC subfamily.

It carries out the reaction presqualene diphosphate + H2O = hydroxysqualene + diphosphate. It functions in the pathway secondary metabolite biosynthesis; hopanoid biosynthesis. Involved in the biosynthesis of the hopanoid precursor squalene (SQ) from farnesyl diphosphate (FPP). Catalyzes the second step, the conversion of presqualene diphosphate (PSPP) to hydroxysqualene (HSQ). In Sinorhizobium fredii (strain NBRC 101917 / NGR234), this protein is Hydroxysqualene synthase.